Here is a 762-residue protein sequence, read N- to C-terminus: Primary amine oxidase, liver isozyme (762 aa).

Residues 1 to 16 (MFIFIFLSLWTLLVMG) form the signal peptide. The interval 23–54 (GSEEGVGKQCHPSLPPRCPSRSPSDQPWTHPD) is disordered. An N-linked (GlcNAc...) asparagine glycan is attached at Asn-136. A disulfide bridge connects residues Cys-197 and Cys-198. N-linked (GlcNAc...) asparagine glycosylation occurs at Asn-231. 383–393 (YMDSGFGMGYF) is a binding site for substrate. Asp-385 serves as the catalytic Proton acceptor. An intrachain disulfide couples Cys-403 to Cys-429. Residue 467–472 (MLNYDY) coordinates substrate. The active-site Schiff-base intermediate with substrate; via topaquinone is Tyr-470. Position 470 is a 2',4',5'-topaquinone (Tyr-470). Residues His-519 and His-521 each contribute to the Cu cation site. Residues Asp-528, Leu-529, Asp-530, Glu-571, Phe-662, and Asn-664 each coordinate Ca(2+). The N-linked (GlcNAc...) asparagine glycan is linked to Asn-665. Positions 666, 672, and 673 each coordinate Ca(2+). His-683 serves as a coordination point for Cu cation. Cys-733 and Cys-740 are disulfide-bonded.

Belongs to the copper/topaquinone oxidase family. As to quaternary structure, homodimer; disulfide-linked. Requires Cu cation as cofactor. The cofactor is Ca(2+). L-topaquinone is required as a cofactor. In terms of processing, topaquinone (TPQ) is generated by copper-dependent autoxidation of a specific tyrosyl residue. Liver.

It localises to the secreted. It is found in the extracellular space. The catalysed reaction is a primary methyl amine + O2 + H2O = an aldehyde + H2O2 + NH4(+). This Bos taurus (Bovine) protein is Primary amine oxidase, liver isozyme.